We begin with the raw amino-acid sequence, 420 residues long: 3-phosphoshikimate 1-carboxyvinyltransferase (420 aa).

3 residues coordinate 3-phosphoshikimate: Lys-26, Ser-27, and Arg-31. Lys-26 serves as a coordination point for phosphoenolpyruvate. Phosphoenolpyruvate is bound by residues Gly-97 and Arg-125. The 3-phosphoshikimate site is built by Ser-170, Ser-171, Gln-172, Asp-297, Asn-320, and Lys-324. Gln-172 serves as a coordination point for phosphoenolpyruvate. Asp-297 acts as the Proton acceptor in catalysis. Phosphoenolpyruvate contacts are provided by Arg-328, Arg-375, and Lys-400.

Belongs to the EPSP synthase family. In terms of assembly, monomer.

The protein resides in the cytoplasm. The catalysed reaction is 3-phosphoshikimate + phosphoenolpyruvate = 5-O-(1-carboxyvinyl)-3-phosphoshikimate + phosphate. It participates in metabolic intermediate biosynthesis; chorismate biosynthesis; chorismate from D-erythrose 4-phosphate and phosphoenolpyruvate: step 6/7. In terms of biological role, catalyzes the transfer of the enolpyruvyl moiety of phosphoenolpyruvate (PEP) to the 5-hydroxyl of shikimate-3-phosphate (S3P) to produce enolpyruvyl shikimate-3-phosphate and inorganic phosphate. The chain is 3-phosphoshikimate 1-carboxyvinyltransferase from Rhizobium etli (strain ATCC 51251 / DSM 11541 / JCM 21823 / NBRC 15573 / CFN 42).